Here is a 10746-residue protein sequence, read N- to C-terminus: Extracellular matrix-binding protein ebh (10746 aa).

An N-terminal signal peptide occupies residues methionine 1–alanine 39. Polar residues-rich tracts occupy residues glutamate 41–glutamine 59 and valine 67–glutamate 113. Disordered stretches follow at residues glutamate 41 to glutamine 174, methionine 246 to valine 274, and isoleucine 1340 to arginine 1372. Low complexity predominate over residues alanine 120 to alanine 130. Residues serine 132–glutamate 158 show a composition bias toward basic and acidic residues. The segment covering valine 162–valine 173 has biased composition (polar residues). Positions glutamine 248 to serine 263 are enriched in low complexity. The segment covering tyrosine 1356 to arginine 1372 has biased composition (polar residues). FIVAR domains are found at residues alanine 2520–alanine 2576, serine 2606–glutamate 2662, aspartate 2683–alanine 2746, alanine 2776–lysine 2832, alanine 2860–asparagine 2915, alanine 2943–asparagine 2998, alanine 3026–lysine 3081, alanine 3150–lysine 3208, alanine 3276–alanine 3335, alanine 3403–alanine 3461, alanine 3529–alanine 3587, alanine 3655–lysine 3713, alanine 3781–alanine 3839, alanine 3907–alanine 3965, alanine 4033–alanine 4091, alanine 4159–alanine 4217, glutamine 4285–alanine 4343, alanine 4411–alanine 4469, alanine 4537–isoleucine 4595, alanine 4663–alanine 4721, alanine 4789–alanine 4847, alanine 4915–methionine 4973, alanine 5041–alanine 5099, alanine 5167–alanine 5225, alanine 5293–alanine 5351, alanine 5419–alanine 5477, alanine 5545–alanine 5603, alanine 5671–alanine 5729, alanine 5797–alanine 5855, alanine 5923–alanine 5981, alanine 6049–lysine 6107, alanine 6175–alanine 6232, alanine 6300–alanine 6358, alanine 6426–alanine 6484, alanine 6552–alanine 6610, alanine 6678–alanine 6736, alanine 6804–alanine 6862, alanine 6930–alanine 6988, alanine 7056–alanine 7114, alanine 7182–alanine 7240, alanine 7308–alanine 7366, alanine 7434–alanine 7492, alanine 7560–alanine 7618, alanine 7686–alanine 7744, alanine 7812–alanine 7870, alanine 7938–alanine 7996, alanine 8064–glutamate 8125, alanine 8190–glutamate 8251, alanine 8316–alanine 8374, alanine 8442–alanine 8500, alanine 8568–alanine 8625, leucine 8693–alanine 8751, alanine 8819–alanine 8877, alanine 8945–leucine 9003, alanine 9071–leucine 9129, alanine 9197–alanine 9255, serine 9323–alanine 9377, valine 9445–leucine 9504, and alanine 9699–alanine 9755. Over residues aspartate 7066 to serine 7080 the composition is skewed to polar residues. The interval aspartate 7066 to aspartate 7085 is disordered. Polar residues predominate over residues aspartate 10492–histidine 10507. Residues aspartate 10492–leucine 10530 form a disordered region. A helical transmembrane segment spans residues isoleucine 10552 to isoleucine 10572. The segment at arginine 10649–lysine 10746 is disordered. Residues threonine 10664–histidine 10674 are compositionally biased toward basic and acidic residues. The segment covering lysine 10719–lysine 10746 has biased composition (basic residues).

It localises to the cell membrane. This is Extracellular matrix-binding protein ebh (ebh) from Staphylococcus aureus (strain MRSA252).